A 319-amino-acid chain; its full sequence is Ribosomal RNA small subunit methyltransferase H (319 aa).

Residues 34-36 (GGH), Asp54, Phe83, Asp104, and Gln111 contribute to the S-adenosyl-L-methionine site.

This sequence belongs to the methyltransferase superfamily. RsmH family.

The protein localises to the cytoplasm. The catalysed reaction is cytidine(1402) in 16S rRNA + S-adenosyl-L-methionine = N(4)-methylcytidine(1402) in 16S rRNA + S-adenosyl-L-homocysteine + H(+). Functionally, specifically methylates the N4 position of cytidine in position 1402 (C1402) of 16S rRNA. The polypeptide is Ribosomal RNA small subunit methyltransferase H (Lactiplantibacillus plantarum (strain ATCC BAA-793 / NCIMB 8826 / WCFS1) (Lactobacillus plantarum)).